A 289-amino-acid chain; its full sequence is Probable prolyl 4-hydroxylase 10 (289 aa).

The chain crosses the membrane as a helical; Signal-anchor for type II membrane protein span at residues 20 to 40 (LVFAVLIMSTFVILILLAFGI). Over 41 to 289 (LSVPSNNAGS…KWLRVHEYKV (249 aa)) the chain is Lumenal. Positions 161–284 (HGEGLQVLHY…KWSSTKWLRV (124 aa)) constitute a Fe2OG dioxygenase domain. Residues His179 and Asp181 each coordinate Fe cation. N-linked (GlcNAc...) asparagine glycosylation is present at Asn220. His265 is a binding site for Fe cation. Residue Lys275 participates in 2-oxoglutarate binding.

This sequence belongs to the P4HA family. Requires Fe(2+) as cofactor. The cofactor is L-ascorbate.

The protein localises to the endoplasmic reticulum membrane. It catalyses the reaction L-prolyl-[collagen] + 2-oxoglutarate + O2 = trans-4-hydroxy-L-prolyl-[collagen] + succinate + CO2. Functionally, catalyzes the post-translational formation of 4-hydroxyproline in -Xaa-Pro-Gly- sequences in proline-rich peptide sequences of plant glycoproteins and other proteins. Hydroxyprolines are important constituent of many plant cell wall glycoproteins such as extensins, hydroxyproline-rich glycoproteins, lectins and arabinogalactan proteins. This Arabidopsis thaliana (Mouse-ear cress) protein is Probable prolyl 4-hydroxylase 10.